We begin with the raw amino-acid sequence, 506 residues long: Glutamate--tRNA ligase (506 aa).

A 'HIGH' region motif is present at residues 12–22 (PSPTGDPHVGT). The short motif at 253–257 (KLSKR) is the 'KMSKS' region element. Residue Lys-256 participates in ATP binding.

This sequence belongs to the class-I aminoacyl-tRNA synthetase family. Glutamate--tRNA ligase type 1 subfamily. Monomer.

The protein resides in the cytoplasm. It carries out the reaction tRNA(Glu) + L-glutamate + ATP = L-glutamyl-tRNA(Glu) + AMP + diphosphate. Catalyzes the attachment of glutamate to tRNA(Glu) in a two-step reaction: glutamate is first activated by ATP to form Glu-AMP and then transferred to the acceptor end of tRNA(Glu). The chain is Glutamate--tRNA ligase from Chlamydia muridarum (strain MoPn / Nigg).